We begin with the raw amino-acid sequence, 252 residues long: Ubiquinone biosynthesis O-methyltransferase (252 aa).

Positions 45, 76, 97, and 141 each coordinate S-adenosyl-L-methionine.

This sequence belongs to the methyltransferase superfamily. UbiG/COQ3 family.

It carries out the reaction a 3-demethylubiquinol + S-adenosyl-L-methionine = a ubiquinol + S-adenosyl-L-homocysteine + H(+). It catalyses the reaction a 3-(all-trans-polyprenyl)benzene-1,2-diol + S-adenosyl-L-methionine = a 2-methoxy-6-(all-trans-polyprenyl)phenol + S-adenosyl-L-homocysteine + H(+). The protein operates within cofactor biosynthesis; ubiquinone biosynthesis. In terms of biological role, O-methyltransferase that catalyzes the 2 O-methylation steps in the ubiquinone biosynthetic pathway. This Caulobacter vibrioides (strain ATCC 19089 / CIP 103742 / CB 15) (Caulobacter crescentus) protein is Ubiquinone biosynthesis O-methyltransferase.